The primary structure comprises 325 residues: Glutarate 2-hydroxylase (325 aa).

The Fe cation site is built by His-160, Asp-162, and His-292.

Belongs to the glutarate hydroxylase family. Homotetramer. Requires Fe(2+) as cofactor.

The enzyme catalyses glutarate + 2-oxoglutarate + O2 = (S)-2-hydroxyglutarate + succinate + CO2. Its pathway is amino-acid degradation. Functionally, acts as an alpha-ketoglutarate-dependent dioxygenase catalyzing hydroxylation of glutarate (GA) to L-2-hydroxyglutarate (L2HG). Functions in a L-lysine degradation pathway that proceeds via cadaverine, glutarate and L-2-hydroxyglutarate. The sequence is that of Glutarate 2-hydroxylase from Escherichia coli O6:H1 (strain CFT073 / ATCC 700928 / UPEC).